Reading from the N-terminus, the 954-residue chain is Glycine dehydrogenase (decarboxylating) (954 aa).

Lys-704 carries the N6-(pyridoxal phosphate)lysine modification.

It belongs to the GcvP family. In terms of assembly, the glycine cleavage system is composed of four proteins: P, T, L and H. It depends on pyridoxal 5'-phosphate as a cofactor.

The enzyme catalyses N(6)-[(R)-lipoyl]-L-lysyl-[glycine-cleavage complex H protein] + glycine + H(+) = N(6)-[(R)-S(8)-aminomethyldihydrolipoyl]-L-lysyl-[glycine-cleavage complex H protein] + CO2. Functionally, the glycine cleavage system catalyzes the degradation of glycine. The P protein binds the alpha-amino group of glycine through its pyridoxal phosphate cofactor; CO(2) is released and the remaining methylamine moiety is then transferred to the lipoamide cofactor of the H protein. In Rhizobium leguminosarum bv. trifolii (strain WSM2304), this protein is Glycine dehydrogenase (decarboxylating).